The chain runs to 231 residues: Sec-independent protein translocase protein TatB (231 aa).

A helical transmembrane segment spans residues 1–21 (MFDIGFSELLLFGVIALIVLG). The tract at residues 77–168 (MRREMAEMRG…SLKTDFNDNA (92 aa)) is disordered. The segment covering 101–111 (ASRDLVDDAKP) has biased composition (basic and acidic residues). Residues 148 to 157 (SEQPSAQGDN) are compositionally biased toward polar residues.

Belongs to the TatB family. In terms of assembly, the Tat system comprises two distinct complexes: a TatABC complex, containing multiple copies of TatA, TatB and TatC subunits, and a separate TatA complex, containing only TatA subunits. Substrates initially bind to the TatABC complex, which probably triggers association of the separate TatA complex to form the active translocon.

The protein localises to the cell inner membrane. Part of the twin-arginine translocation (Tat) system that transports large folded proteins containing a characteristic twin-arginine motif in their signal peptide across membranes. Together with TatC, TatB is part of a receptor directly interacting with Tat signal peptides. TatB may form an oligomeric binding site that transiently accommodates folded Tat precursor proteins before their translocation. This chain is Sec-independent protein translocase protein TatB, found in Psychrobacter cryohalolentis (strain ATCC BAA-1226 / DSM 17306 / VKM B-2378 / K5).